A 47-amino-acid polypeptide reads, in one-letter code: Lysis protein for colicin E7 (47 aa).

Residues 1–19 (MKKITGIILLLLAAIILAA) form the signal peptide. Residue Cys-20 is the site of N-palmitoyl cysteine attachment. A lipid anchor (S-diacylglycerol cysteine) is attached at Cys-20.

It localises to the cell outer membrane. In terms of biological role, lysis proteins are required for both colicin release and partial cell lysis. The sequence is that of Lysis protein for colicin E7 (lys) from Escherichia coli.